The sequence spans 273 residues: Shikimate dehydrogenase (NADP(+)) (273 aa).

Shikimate is bound by residues 15–17 and T62; that span reads SQS. Residue K66 is the Proton acceptor of the active site. Residue E78 participates in NADP(+) binding. The shikimate site is built by N87 and D102. NADP(+) is bound by residues 127–131, 151–156, and M215; these read GAGGA and NRTVIK. Y217 is a binding site for shikimate. G239 lines the NADP(+) pocket.

It belongs to the shikimate dehydrogenase family. Homodimer.

The enzyme catalyses shikimate + NADP(+) = 3-dehydroshikimate + NADPH + H(+). The protein operates within metabolic intermediate biosynthesis; chorismate biosynthesis; chorismate from D-erythrose 4-phosphate and phosphoenolpyruvate: step 4/7. Its function is as follows. Involved in the biosynthesis of the chorismate, which leads to the biosynthesis of aromatic amino acids. Catalyzes the reversible NADPH linked reduction of 3-dehydroshikimate (DHSA) to yield shikimate (SA). This chain is Shikimate dehydrogenase (NADP(+)), found in Chromobacterium violaceum (strain ATCC 12472 / DSM 30191 / JCM 1249 / CCUG 213 / NBRC 12614 / NCIMB 9131 / NCTC 9757 / MK).